The following is a 295-amino-acid chain: Ethanolamine ammonia-lyase small subunit (295 aa).

Adenosylcob(III)alamin-binding residues include V207, E228, and C258.

This sequence belongs to the EutC family. The basic unit is a heterodimer which dimerizes to form tetramers. The heterotetramers trimerize; 6 large subunits form a core ring with 6 small subunits projecting outwards. The cofactor is adenosylcob(III)alamin.

It localises to the bacterial microcompartment. It carries out the reaction ethanolamine = acetaldehyde + NH4(+). It functions in the pathway amine and polyamine degradation; ethanolamine degradation. Functionally, catalyzes the deamination of various vicinal amino-alcohols to oxo compounds. Allows this organism to utilize ethanolamine as the sole source of nitrogen and carbon in the presence of external vitamin B12. The chain is Ethanolamine ammonia-lyase small subunit from Escherichia coli (strain 55989 / EAEC).